A 208-amino-acid chain; its full sequence is Attacin-A (208 aa).

The first 20 residues, 1 to 20 (MQSFKICFFISCLSVVLVKG), serve as a signal peptide directing secretion. The propeptide occupies 21 to 47 (QFGGTVSSNPNGGLDVNARLSKTIGDP).

As to expression, hemolymph and fat body.

It is found in the secreted. Its function is as follows. Hemolymph antibacterial protein against Gram-negative bacteria. This chain is Attacin-A, found in Glossina morsitans morsitans (Savannah tsetse fly).